Consider the following 282-residue polypeptide: Glycine/sarcosine N-methyltransferase (282 aa).

Positions 1–23 are enriched in polar residues; sequence MTSTQNHPLQTQDDQQRFGQSPE. A disordered region spans residues 1-27; the sequence is MTSTQNHPLQTQDDQQRFGQSPESVRE. S-adenosyl-L-methionine contacts are provided by residues Y35, W43, R52, A76, D97, 123-124, and L141; that span reads DW. 3 residues coordinate substrate: N143, R176, and Y217.

This sequence belongs to the class I-like SAM-binding methyltransferase superfamily. Glycine N-methyltransferase family. As to quaternary structure, monomer.

The catalysed reaction is glycine + 2 S-adenosyl-L-methionine = N,N-dimethylglycine + 2 S-adenosyl-L-homocysteine + 2 H(+). The enzyme catalyses glycine + S-adenosyl-L-methionine = sarcosine + S-adenosyl-L-homocysteine + H(+). It catalyses the reaction sarcosine + S-adenosyl-L-methionine = N,N-dimethylglycine + S-adenosyl-L-homocysteine + H(+). The protein operates within amine and polyamine biosynthesis; betaine biosynthesis via glycine pathway; betaine from glycine: step 1/3. Its pathway is amine and polyamine biosynthesis; betaine biosynthesis via glycine pathway; betaine from glycine: step 2/3. Functionally, catalyzes the methylation of glycine and sarcosine to sarcosine and dimethylglycine, respectively, with S-adenosylmethionine (AdoMet) acting as the methyl donor. It has strict specificity for glycine and sarcosine as the methyl group acceptors. In Parasynechococcus marenigrum (strain WH8102), this protein is Glycine/sarcosine N-methyltransferase.